The sequence spans 569 residues: Carotenoid cleavage dioxygenase 8 homolog B, chloroplastic (569 aa).

The N-terminal 43 residues, 1–43 (MSPAMLQASSLCVSAALSGAASRPGRLASQGHQGKRAVAQPLA), are a transit peptide targeting the chloroplast. Positions 23–81 (RPGRLASQGHQGKRAVAQPLAASAVTEAAPPAPVVAPPARPVDAPRRRGGRGGGGGGGE) are disordered. The span at 52-62 (PPAPVVAPPAR) shows a compositional bias: pro residues. 4 residues coordinate Fe cation: H251, H301, H368, and H558.

The protein belongs to the carotenoid oxygenase family. Fe(2+) serves as cofactor. Expressed in parenchyma cells of the root stele, shoot apex, leaf buds, xylem parenchyma cells of the stem, inflorescences and panicles.

Its subcellular location is the plastid. The protein resides in the chloroplast. The enzyme catalyses 9-cis-10'-apo-beta-carotenal + 2 O2 = (2E,4E,6E)-7-hydroxy-4-methylhepta-2,4,6-trienal + (11R)-carlactone. It catalyses the reaction all-trans-10'-apo-beta-carotenal + O2 = (2E,4E,6E)-4-methylocta-2,4,6-trienedial + 13-apo-beta-carotenone. Involved in strigolactones biosynthesis by cleaving the C(27) 9-cis-10'-apo-beta-carotenal produced by CCD7. Produces the C(19) carlactone and a C(8) hydroxyaldehyde. Also shows lower activity with all-trans-10'-apo-beta-carotenal producing a C(9) dialdehyde and the C(18) 13-apo-beta-carotenone. Strigolactones are hormones that inhibit tillering and shoot branching through the MAX-dependent pathway, contribute to the regulation of shoot architectural response to phosphate-limiting conditions and function as rhizosphere signal that stimulates hyphal branching of arbuscular mycorrhizal fungi and trigger seed germination of root parasitic weeds. This is Carotenoid cleavage dioxygenase 8 homolog B, chloroplastic (CCD8B) from Oryza sativa subsp. japonica (Rice).